A 326-amino-acid polypeptide reads, in one-letter code: ATP-dependent 6-phosphofructokinase (326 aa).

ATP is bound at residue G12. Residue 22–26 participates in ADP binding; the sequence is RAIIK. Residues 73 to 74 and 103 to 106 contribute to the ATP site; these read RF and GDGS. D104 contributes to the Mg(2+) binding site. 126-128 provides a ligand contact to substrate; it reads TID. The active-site Proton acceptor is the D128. Residue R155 participates in ADP binding. Substrate-binding positions include R163 and 170–172; that span reads MGH. ADP-binding positions include 186–188, K212, and 215–217; these read GSE and KRS. Residues E224, K246, and 252–255 each bind substrate; that span reads HIQR.

Belongs to the phosphofructokinase type A (PFKA) family. ATP-dependent PFK group I subfamily. Prokaryotic clade 'B1' sub-subfamily. In terms of assembly, homotetramer. It depends on Mg(2+) as a cofactor.

It is found in the cytoplasm. The catalysed reaction is beta-D-fructose 6-phosphate + ATP = beta-D-fructose 1,6-bisphosphate + ADP + H(+). It functions in the pathway carbohydrate degradation; glycolysis; D-glyceraldehyde 3-phosphate and glycerone phosphate from D-glucose: step 3/4. Allosterically activated by ADP and other diphosphonucleosides, and allosterically inhibited by phosphoenolpyruvate. Functionally, catalyzes the phosphorylation of D-fructose 6-phosphate to fructose 1,6-bisphosphate by ATP, the first committing step of glycolysis. This chain is ATP-dependent 6-phosphofructokinase, found in Mycoplasmopsis pulmonis (strain UAB CTIP) (Mycoplasma pulmonis).